A 445-amino-acid polypeptide reads, in one-letter code: Tryptophan 5-hydroxylase 1 (445 aa).

The 76-residue stretch at Ala-19 to His-94 folds into the ACT domain. Ser-58 is modified (phosphoserine; by PKA). The L-tryptophan site is built by Tyr-236, Arg-258, and Thr-266. Fe cation-binding residues include His-273, His-278, and Glu-318. Positions 337 and 367 each coordinate L-tryptophan.

Belongs to the biopterin-dependent aromatic amino acid hydroxylase family. In terms of assembly, homotetramer. Fe(2+) serves as cofactor.

The enzyme catalyses (6R)-L-erythro-5,6,7,8-tetrahydrobiopterin + L-tryptophan + O2 = 5-hydroxy-L-tryptophan + (4aS,6R)-4a-hydroxy-L-erythro-5,6,7,8-tetrahydrobiopterin. Its pathway is aromatic compound metabolism; serotonin biosynthesis; serotonin from L-tryptophan: step 1/2. Oxidizes L-tryptophan to 5-hydroxy-l-tryptophan in the rate-determining step of serotonin biosynthesis. This is Tryptophan 5-hydroxylase 1 (TPH1) from Gallus gallus (Chicken).